Consider the following 209-residue polypeptide: Imidazoleglycerol-phosphate dehydratase (209 aa).

Residues 1 to 23 are disordered; the sequence is MQLSDRPLTAPGTAPRQATVSRR.

Belongs to the imidazoleglycerol-phosphate dehydratase family.

It is found in the cytoplasm. It catalyses the reaction D-erythro-1-(imidazol-4-yl)glycerol 3-phosphate = 3-(imidazol-4-yl)-2-oxopropyl phosphate + H2O. The protein operates within amino-acid biosynthesis; L-histidine biosynthesis; L-histidine from 5-phospho-alpha-D-ribose 1-diphosphate: step 6/9. This Synechococcus elongatus (strain ATCC 33912 / PCC 7942 / FACHB-805) (Anacystis nidulans R2) protein is Imidazoleglycerol-phosphate dehydratase.